The primary structure comprises 613 residues: AP-5 complex subunit mu (613 aa).

Residues Lys309–Val563 enclose the MHD domain. Residues Ser501–Glu522 form a disordered region. A compositionally biased stretch (acidic residues) spans Gly511 to Ala521.

It belongs to the adaptor complexes medium subunit family. As to quaternary structure, probably part of the adaptor protein complex 5 (AP-5).

It is found in the cytoplasmic vesicle membrane. The chain is AP-5 complex subunit mu (AP5M) from Arabidopsis thaliana (Mouse-ear cress).